A 78-amino-acid polypeptide reads, in one-letter code: UPF0291 protein LBUL_1264 (78 aa).

Belongs to the UPF0291 family.

It is found in the cytoplasm. The polypeptide is UPF0291 protein LBUL_1264 (Lactobacillus delbrueckii subsp. bulgaricus (strain ATCC BAA-365 / Lb-18)).